Here is a 314-residue protein sequence, read N- to C-terminus: Mitochondrial 2-oxoglutarate/malate carrier protein (314 aa).

Alanine 2 is subject to N-acetylalanine. Position 6 is a phosphoserine (serine 6). Solcar repeat units lie at residues 23–108 (VKFL…LFER), 117–208 (PGFL…SKQF), and 217–306 (DNIL…MNKA). A helical transmembrane segment spans residues 24–42 (KFLFGGLAGMGATVFVQPL). The residue at position 57 (lysine 57) is an N6-succinyllysine. Lysine 73 is modified (N6-acetyllysine). The chain crosses the membrane as a helical span at residues 83-101 (GLSAGLLRQATYTTTRLGI). Tyrosine 102 is modified (phosphotyrosine). The next 3 helical transmembrane spans lie at 119–140 (FLLKALIGMTAGATGAFVGPPA), 183–202 (GCIPTMARAVVVNAAQLASY), and 222–240 (HFCAIMISGLVTTAASMPV). N6-acetyllysine is present on lysine 256. The chain crosses the membrane as a helical span at residues 281–300 (GFTPYYARLGPHTVLTFIFL).

The protein belongs to the mitochondrial carrier (TC 2.A.29) family. As to quaternary structure, interacts with SMIM26. As to expression, expressed in liver, heart and brain.

The protein resides in the mitochondrion inner membrane. The enzyme catalyses (S)-malate(in) + 2-oxoglutarate(out) = (S)-malate(out) + 2-oxoglutarate(in). It carries out the reaction malonate(in) + 2-oxoglutarate(out) = malonate(out) + 2-oxoglutarate(in). The catalysed reaction is succinate(in) + 2-oxoglutarate(out) = succinate(out) + 2-oxoglutarate(in). It catalyses the reaction maleate(in) + 2-oxoglutarate(out) = maleate(out) + 2-oxoglutarate(in). The enzyme catalyses oxaloacetate(in) + 2-oxoglutarate(out) = oxaloacetate(out) + 2-oxoglutarate(in). Catalyzes the transport of 2-oxoglutarate (alpha-oxoglutarate) across the inner mitochondrial membrane in an electroneutral exchange for malate. Can also exchange 2-oxoglutarate for other dicarboxylic acids such as malonate, succinate, maleate and oxaloacetate, although with lower affinity. Contributes to several metabolic processes, including the malate-aspartate shuttle, the oxoglutarate/isocitrate shuttle, in gluconeogenesis from lactate, and in nitrogen metabolism. Maintains mitochondrial fusion and fission events, and the organization and morphology of cristae. Involved in the regulation of apoptosis. Helps protect from cytotoxic-induced apoptosis by modulating glutathione levels in mitochondria. The polypeptide is Mitochondrial 2-oxoglutarate/malate carrier protein (Slc25a11) (Rattus norvegicus (Rat)).